We begin with the raw amino-acid sequence, 252 residues long: Phosphoglycolate phosphatase (252 aa).

Catalysis depends on D13, which acts as the Nucleophile. Residues D13, D15, and D192 each coordinate Mg(2+).

This sequence belongs to the HAD-like hydrolase superfamily. CbbY/CbbZ/Gph/YieH family. In terms of assembly, monomer. Mg(2+) is required as a cofactor. The cofactor is chloride.

The enzyme catalyses 2-phosphoglycolate + H2O = glycolate + phosphate. The protein operates within organic acid metabolism; glycolate biosynthesis; glycolate from 2-phosphoglycolate: step 1/1. Its function is as follows. Specifically catalyzes the dephosphorylation of 2-phosphoglycolate. Is involved in the dissimilation of the intracellular 2-phosphoglycolate formed during the DNA repair of 3'-phosphoglycolate ends, a major class of DNA lesions induced by oxidative stress. This chain is Phosphoglycolate phosphatase, found in Salmonella choleraesuis (strain SC-B67).